Reading from the N-terminus, the 379-residue chain is Succinyl-diaminopimelate desuccinylase (379 aa).

H70 serves as a coordination point for Zn(2+). D72 is a catalytic residue. D103 is a Zn(2+) binding site. E137 (proton acceptor) is an active-site residue. Zn(2+) is bound by residues E138, E166, and H352.

Belongs to the peptidase M20A family. DapE subfamily. As to quaternary structure, homodimer. Zn(2+) serves as cofactor. It depends on Co(2+) as a cofactor.

It carries out the reaction N-succinyl-(2S,6S)-2,6-diaminopimelate + H2O = (2S,6S)-2,6-diaminopimelate + succinate. It participates in amino-acid biosynthesis; L-lysine biosynthesis via DAP pathway; LL-2,6-diaminopimelate from (S)-tetrahydrodipicolinate (succinylase route): step 3/3. Catalyzes the hydrolysis of N-succinyl-L,L-diaminopimelic acid (SDAP), forming succinate and LL-2,6-diaminopimelate (DAP), an intermediate involved in the bacterial biosynthesis of lysine and meso-diaminopimelic acid, an essential component of bacterial cell walls. The chain is Succinyl-diaminopimelate desuccinylase from Burkholderia lata (strain ATCC 17760 / DSM 23089 / LMG 22485 / NCIMB 9086 / R18194 / 383).